The sequence spans 195 residues: Imidazoleglycerol-phosphate dehydratase (195 aa).

This sequence belongs to the imidazoleglycerol-phosphate dehydratase family.

The protein resides in the cytoplasm. The enzyme catalyses D-erythro-1-(imidazol-4-yl)glycerol 3-phosphate = 3-(imidazol-4-yl)-2-oxopropyl phosphate + H2O. The protein operates within amino-acid biosynthesis; L-histidine biosynthesis; L-histidine from 5-phospho-alpha-D-ribose 1-diphosphate: step 6/9. This is Imidazoleglycerol-phosphate dehydratase from Sphingopyxis alaskensis (strain DSM 13593 / LMG 18877 / RB2256) (Sphingomonas alaskensis).